A 163-amino-acid chain; its full sequence is NADH-quinone oxidoreductase subunit 9 (163 aa).

2 4Fe-4S ferredoxin-type domains span residues 54-84 and 94-123; these read LRRYPNGEERCIACKLCEAVCPAQAITIDAE and TRYDIDMTKCIYCGFCQEACPVDAIVEGPN. Positions 64, 67, 70, 74, 103, 106, 109, and 113 each coordinate [4Fe-4S] cluster.

The protein belongs to the complex I 23 kDa subunit family. NDH-1 is composed of at least 14 different subunits, Nqo1 to Nqo14. The complex has a L-shaped structure, with the hydrophobic arm (subunits Nqo7, Nqo8, Nqo10 to Nqo14) embedded in the inner membrane and the hydrophilic peripheral arm (subunits Nqo1 to Nqo6, Nqo9) protruding into the bacterial cytoplasm. The hydrophilic domain contains all the redox centers. Requires [4Fe-4S] cluster as cofactor.

Its subcellular location is the cell inner membrane. It carries out the reaction a quinone + NADH + 5 H(+)(in) = a quinol + NAD(+) + 4 H(+)(out). Functionally, NDH-1 shuttles electrons from NADH, via FMN and iron-sulfur (Fe-S) centers, to quinones in the respiratory chain. The immediate electron acceptor for the enzyme in this species is believed to be ubiquinone. Couples the redox reaction to proton translocation (for every two electrons transferred, four hydrogen ions are translocated across the cytoplasmic membrane), and thus conserves the redox energy in a proton gradient. This is NADH-quinone oxidoreductase subunit 9 from Paracoccus denitrificans.